A 317-amino-acid polypeptide reads, in one-letter code: Ribosomal protein L11 methyltransferase (317 aa).

Positions 158, 179, 201, and 244 each coordinate S-adenosyl-L-methionine.

This sequence belongs to the methyltransferase superfamily. PrmA family.

The protein resides in the cytoplasm. The enzyme catalyses L-lysyl-[protein] + 3 S-adenosyl-L-methionine = N(6),N(6),N(6)-trimethyl-L-lysyl-[protein] + 3 S-adenosyl-L-homocysteine + 3 H(+). Methylates ribosomal protein L11. The sequence is that of Ribosomal protein L11 methyltransferase from Streptococcus mutans serotype c (strain ATCC 700610 / UA159).